We begin with the raw amino-acid sequence, 616 residues long: MPKYRSATTTHGRNMAGARALWRATGMTDSDFGKPIIAVVNSFTQFVPGHVHLRDLGKLVAEQIEASGGVAKEFNTIAVDDGIAMGHGGMLYSLPSRELIADSVEYMVNAHCADAMVCISNCDKITPGMLMASLRLNIPVIFVSGGPMEAGKTKLSDKIIKLDLVDAMIQGADPKVSDDQSNQVERSACPTCGSCSGMFTANSMNCLTEALGLSQPGNGSLLATHADRKQLFLNAGKRIVELTKRYYEQNDESALPRNIASKAAFENAMTLDIAMGGSTNTVLHLLAAAQEAEIDFTMSDIDKLSRKVPQLCKVAPSTQKYHMEDVHRAGGVLGILGELDRAGLLNRNVKNVLGLTLPQTLEQYDITVTQDEAVKKMFRAGPAGIRTTQAFSQDCRWDSLDDDRAAGCIRSLEYAYSKDGGLAVLYGNFAENGCIVKTAGVDDSILKFTGPAKVYESQDEAVEAILGGKVVEGDVVVIRYEGPKGGPGMQEMLYPTSFLKSMGLGKACALITDGRFSGGTSGLSIGHVSPEAASGGTIALIEDGDTIAIDIPNRSIQLQLSEAEIAARREAQEARGDKAWTPKNRQRQVSFALRAYASLATSADKGAVRDKSKLGG.

Asp81 is a binding site for Mg(2+). Position 122 (Cys122) interacts with [2Fe-2S] cluster. Asp123 and Lys124 together coordinate Mg(2+). Position 124 is an N6-carboxylysine (Lys124). Cys195 is a [2Fe-2S] cluster binding site. Mg(2+) is bound at residue Glu491. The active-site Proton acceptor is the Ser517.

It belongs to the IlvD/Edd family. Homodimer. [2Fe-2S] cluster serves as cofactor. It depends on Mg(2+) as a cofactor.

The enzyme catalyses (2R)-2,3-dihydroxy-3-methylbutanoate = 3-methyl-2-oxobutanoate + H2O. It catalyses the reaction (2R,3R)-2,3-dihydroxy-3-methylpentanoate = (S)-3-methyl-2-oxopentanoate + H2O. Its pathway is amino-acid biosynthesis; L-isoleucine biosynthesis; L-isoleucine from 2-oxobutanoate: step 3/4. It functions in the pathway amino-acid biosynthesis; L-valine biosynthesis; L-valine from pyruvate: step 3/4. Functionally, functions in the biosynthesis of branched-chain amino acids. Catalyzes the dehydration of (2R,3R)-2,3-dihydroxy-3-methylpentanoate (2,3-dihydroxy-3-methylvalerate) into 2-oxo-3-methylpentanoate (2-oxo-3-methylvalerate) and of (2R)-2,3-dihydroxy-3-methylbutanoate (2,3-dihydroxyisovalerate) into 2-oxo-3-methylbutanoate (2-oxoisovalerate), the penultimate precursor to L-isoleucine and L-valine, respectively. The polypeptide is Dihydroxy-acid dehydratase (Salmonella newport (strain SL254)).